A 367-amino-acid polypeptide reads, in one-letter code: Homoserine O-acetyltransferase (367 aa).

The region spanning asparagine 44–glutamate 350 is the AB hydrolase-1 domain. Serine 150 functions as the Nucleophile in the catalytic mechanism. Residue arginine 217 coordinates substrate. Residues aspartate 311 and histidine 344 contribute to the active site. Residue aspartate 345 coordinates substrate.

This sequence belongs to the AB hydrolase superfamily. MetX family. Homodimer.

It is found in the cytoplasm. The catalysed reaction is L-homoserine + acetyl-CoA = O-acetyl-L-homoserine + CoA. Its pathway is amino-acid biosynthesis; L-methionine biosynthesis via de novo pathway; O-acetyl-L-homoserine from L-homoserine: step 1/1. Its function is as follows. Transfers an acetyl group from acetyl-CoA to L-homoserine, forming acetyl-L-homoserine. This chain is Homoserine O-acetyltransferase, found in Geotalea daltonii (strain DSM 22248 / JCM 15807 / FRC-32) (Geobacter daltonii).